A 226-amino-acid polypeptide reads, in one-letter code: uncharacterized protein (226 aa).

Residues 75 to 226 (YTIRNVTKDD…KGWLRMVKRI (152 aa)) enclose the N-acetyltransferase domain.

It belongs to the acetyltransferase family.

This is an uncharacterized protein from Methanocaldococcus jannaschii (strain ATCC 43067 / DSM 2661 / JAL-1 / JCM 10045 / NBRC 100440) (Methanococcus jannaschii).